The primary structure comprises 260 residues: Diphthine synthase (260 aa).

Residues Leu-9, Asp-85, Ile-88, Thr-113–Ala-114, Leu-168, Ala-202, and His-227 each bind S-adenosyl-L-methionine.

This sequence belongs to the diphthine synthase family. Homodimer.

It carries out the reaction 2-[(3S)-amino-3-carboxypropyl]-L-histidyl-[translation elongation factor 2] + 3 S-adenosyl-L-methionine = diphthine-[translation elongation factor 2] + 3 S-adenosyl-L-homocysteine + 3 H(+). It participates in protein modification; peptidyl-diphthamide biosynthesis. S-adenosyl-L-methionine-dependent methyltransferase that catalyzes the trimethylation of the amino group of the modified target histidine residue in translation elongation factor 2 (EF-2), to form an intermediate called diphthine. The three successive methylation reactions represent the second step of diphthamide biosynthesis. The chain is Diphthine synthase from Haloquadratum walsbyi (strain DSM 16790 / HBSQ001).